Consider the following 1208-residue polypeptide: DNA-directed RNA polymerase subunit beta (1208 aa).

This sequence belongs to the RNA polymerase beta chain family. In terms of assembly, the RNAP catalytic core consists of 2 alpha, 1 beta, 1 beta' and 1 omega subunit. When a sigma factor is associated with the core the holoenzyme is formed, which can initiate transcription.

The catalysed reaction is RNA(n) + a ribonucleoside 5'-triphosphate = RNA(n+1) + diphosphate. Its function is as follows. DNA-dependent RNA polymerase catalyzes the transcription of DNA into RNA using the four ribonucleoside triphosphates as substrates. The polypeptide is DNA-directed RNA polymerase subunit beta (Enterococcus faecium (Streptococcus faecium)).